We begin with the raw amino-acid sequence, 276 residues long: ATP synthase subunit a (276 aa).

Transmembrane regions (helical) follow at residues 47 to 67, 107 to 127, 152 to 172, 188 to 208, 226 to 246, and 247 to 267; these read WHIDSLLFSVGLGVLFLWLFY, IAPLGLTIFVWVFLMNLMDLI, DLNVTLGLALSVFALIVFYSI, PFNHWALIPINFVLETVTLVA, LIFILIALMPWWAQFALSVPW, and AIFHILVIVLQAFIFMMLTIV.

This sequence belongs to the ATPase A chain family. As to quaternary structure, F-type ATPases have 2 components, CF(1) - the catalytic core - and CF(0) - the membrane proton channel. CF(1) has five subunits: alpha(3), beta(3), gamma(1), delta(1), epsilon(1). CF(0) has three main subunits: a(1), b(2) and c(9-12). The alpha and beta chains form an alternating ring which encloses part of the gamma chain. CF(1) is attached to CF(0) by a central stalk formed by the gamma and epsilon chains, while a peripheral stalk is formed by the delta and b chains.

It localises to the cell inner membrane. Its function is as follows. Key component of the proton channel; it plays a direct role in the translocation of protons across the membrane. This is ATP synthase subunit a from Shewanella pealeana (strain ATCC 700345 / ANG-SQ1).